The chain runs to 90 residues: Large ribosomal subunit protein bL27 (90 aa).

It belongs to the bacterial ribosomal protein bL27 family.

This is Large ribosomal subunit protein bL27 from Paracoccus denitrificans (strain Pd 1222).